The sequence spans 240 residues: Putative outer membrane protein RT0057 (240 aa).

Residues 1–20 (MLKKLCVILFISSITINSHA) form the signal peptide.

Belongs to the OmpW/AlkL family.

It is found in the cell outer membrane. This Rickettsia typhi (strain ATCC VR-144 / Wilmington) protein is Putative outer membrane protein RT0057.